A 622-amino-acid chain; its full sequence is Chaperone protein HscA homolog (622 aa).

It belongs to the heat shock protein 70 family.

In terms of biological role, chaperone involved in the maturation of iron-sulfur cluster-containing proteins. Has a low intrinsic ATPase activity which is markedly stimulated by HscB. This is Chaperone protein HscA homolog from Pseudoalteromonas atlantica (strain T6c / ATCC BAA-1087).